A 272-amino-acid chain; its full sequence is Transcription factor PU.1 (272 aa).

The interval 126-165 (SPAHQQSSDEEEGERQSPPLEVSDGEADGLEPGPGLLHGE) is disordered. Serine 142 and serine 148 each carry phosphoserine. Over residues 155 to 165 (LEPGPGLLHGE) the composition is skewed to low complexity. The ETS DNA-binding region spans 172 to 255 (IRLYQFLLDL…VKKKLTYQFS (84 aa)). 4 residues coordinate DNA: lysine 219, arginine 232, arginine 235, and lysine 245.

The protein belongs to the ETS family. As to quaternary structure, binds DNA as a monomer. Can form homomers. Directly interacts with CEBPD/NF-IL6-beta; this interaction does not affect DNA-binding properties of each partner. Interacts with NONO/p54(nrb). Interacts with RUNX1/AML1. Interacts with GFI1; the interaction represses SPI1 transcriptional activity, hence blocks SPI1-induced macrophage differentiation of myeloid progenitor cells. Interacts with CEBPE. Interacts with IRF4/Pip and IRF8. Interacts with JUN. Interacts with RB1. Interacts with TBP. As to expression, expressed in spleen, thymus and bone-marrow macrophages.

The protein resides in the nucleus. With respect to regulation, transcriptional activity at macrophage-specific genes is inhibited by interaction with GFI1, which results in inhibition of SPI1-induced macrophage differentiation of myeloid progenitor cells, but not that of the granulocyte lineage. Pioneer transcription factor, which controls hematopoietic cell fate by decompacting stem cell heterochromatin and allowing other transcription factors to enter otherwise inaccessible genomic sites. Once in open chromatin, can directly control gene expression by binding genetic regulatory elements and can also more broadly influence transcription by recruiting transcription factors, such as interferon regulatory factors (IRFs), to otherwise inaccessible genomic regions. Transcriptionally activates genes important for myeloid and lymphoid lineages, such as CSF1R. Transcriptional activation from certain promoters, possibly containing low affinity binding sites, is achieved cooperatively with other transcription factors. FCER1A transactivation is achieved in cooperation with GATA1. May be particularly important for the pro- to pre-B cell transition. Binds (via the ETS domain) onto the purine-rich DNA core sequence 5'-GAGGAA-3', also known as the PU-box. In vitro can bind RNA and interfere with pre-mRNA splicing. The sequence is that of Transcription factor PU.1 (Spi1) from Mus musculus (Mouse).